The primary structure comprises 111 residues: Universal stress protein B (111 aa).

The next 2 helical transmembrane spans lie at 1 to 21 (MIST…NMAR) and 90 to 110 (FILT…LMLW).

Belongs to the universal stress protein B family.

The protein localises to the cell inner membrane. This is Universal stress protein B from Yersinia pseudotuberculosis serotype O:1b (strain IP 31758).